Consider the following 1171-residue polypeptide: ATP-dependent helicase/deoxyribonuclease subunit B (1171 aa).

Residues 1–390 (MSLRFVIGRA…HPLVECIRSA (390 aa)) enclose the UvrD-like helicase ATP-binding domain. 8 to 15 (GRAGSGKS) contacts ATP. Residues 281 to 587 (MEQPRFHSPA…QFANIPPSLD (307 aa)) enclose the UvrD-like helicase C-terminal domain. Positions 805, 1129, 1132, and 1138 each coordinate [4Fe-4S] cluster.

This sequence belongs to the helicase family. AddB/RexB type 1 subfamily. In terms of assembly, heterodimer of AddA and AddB. Requires Mg(2+) as cofactor. [4Fe-4S] cluster serves as cofactor.

The heterodimer acts as both an ATP-dependent DNA helicase and an ATP-dependent, dual-direction single-stranded exonuclease. Recognizes the chi site generating a DNA molecule suitable for the initiation of homologous recombination. The AddB subunit has 5' -&gt; 3' nuclease activity but not helicase activity. This is ATP-dependent helicase/deoxyribonuclease subunit B from Bacillus cereus (strain B4264).